The sequence spans 109 residues: Spermidine export protein MdtI (109 aa).

Residues 1-5 (MAQFE) lie on the Periplasmic side of the membrane. The chain crosses the membrane as a helical span at residues 6-26 (WVHAAWLALAIVLEIIANVFL). Topologically, residues 27–35 (KFSDGFRRK) are cytoplasmic. The chain crosses the membrane as a helical span at residues 36–56 (IFGLLSLAAVLAAFSALSQAV). At 57-63 (KGIDLSV) the chain is on the periplasmic side. The chain crosses the membrane as a helical span at residues 64–84 (AYALWGGFGIAATLAAGWILF). Residues 85 to 87 (GQR) lie on the Cytoplasmic side of the membrane. A helical membrane pass occupies residues 88-108 (LNRKGWIGLVLLLAGMIMVKL). Residue Ala109 is a topological domain, periplasmic.

This sequence belongs to the drug/metabolite transporter (DMT) superfamily. Small multidrug resistance (SMR) (TC 2.A.7.1) family. MdtI subfamily. As to quaternary structure, forms a complex with MdtJ.

It is found in the cell inner membrane. Its function is as follows. Catalyzes the excretion of spermidine. This is Spermidine export protein MdtI (mdtI) from Escherichia coli O6:H1 (strain CFT073 / ATCC 700928 / UPEC).